A 223-amino-acid polypeptide reads, in one-letter code: Octanoyltransferase (223 aa).

The 186-residue stretch at 31–216 (GQIGDTLLLL…QIGEVFALEP (186 aa)) folds into the BPL/LPL catalytic domain. Substrate contacts are provided by residues 76 to 83 (RGGEVTYH), 145 to 147 (AIG), and 159 to 161 (GLA). The active-site Acyl-thioester intermediate is Cys-177.

The protein belongs to the LipB family.

Its subcellular location is the cytoplasm. It catalyses the reaction octanoyl-[ACP] + L-lysyl-[protein] = N(6)-octanoyl-L-lysyl-[protein] + holo-[ACP] + H(+). It participates in protein modification; protein lipoylation via endogenous pathway; protein N(6)-(lipoyl)lysine from octanoyl-[acyl-carrier-protein]: step 1/2. In terms of biological role, catalyzes the transfer of endogenously produced octanoic acid from octanoyl-acyl-carrier-protein onto the lipoyl domains of lipoate-dependent enzymes. Lipoyl-ACP can also act as a substrate although octanoyl-ACP is likely to be the physiological substrate. This is Octanoyltransferase from Chloroflexus aurantiacus (strain ATCC 29366 / DSM 635 / J-10-fl).